Reading from the N-terminus, the 185-residue chain is Ribosome-recycling factor (185 aa).

This sequence belongs to the RRF family.

The protein localises to the cytoplasm. Functionally, responsible for the release of ribosomes from messenger RNA at the termination of protein biosynthesis. May increase the efficiency of translation by recycling ribosomes from one round of translation to another. This chain is Ribosome-recycling factor, found in Shewanella piezotolerans (strain WP3 / JCM 13877).